Here is a 294-residue protein sequence, read N- to C-terminus: UDP-3-O-acyl-N-acetylglucosamine deacetylase (294 aa).

Zn(2+)-binding residues include His-75, His-232, and Asp-236. The active-site Proton donor is the His-259.

This sequence belongs to the LpxC family. Zn(2+) is required as a cofactor.

The enzyme catalyses a UDP-3-O-[(3R)-3-hydroxyacyl]-N-acetyl-alpha-D-glucosamine + H2O = a UDP-3-O-[(3R)-3-hydroxyacyl]-alpha-D-glucosamine + acetate. It functions in the pathway glycolipid biosynthesis; lipid IV(A) biosynthesis; lipid IV(A) from (3R)-3-hydroxytetradecanoyl-[acyl-carrier-protein] and UDP-N-acetyl-alpha-D-glucosamine: step 2/6. Catalyzes the hydrolysis of UDP-3-O-myristoyl-N-acetylglucosamine to form UDP-3-O-myristoylglucosamine and acetate, the committed step in lipid A biosynthesis. The protein is UDP-3-O-acyl-N-acetylglucosamine deacetylase of Sulfurimonas denitrificans (strain ATCC 33889 / DSM 1251) (Thiomicrospira denitrificans (strain ATCC 33889 / DSM 1251)).